We begin with the raw amino-acid sequence, 337 residues long: MTKPQPPPILDFSVFYGHDSQAKAQLVQRVRECCLNNGFFQITGHKVSPELQRRTFDCAKRFFDLPLIEKKKIERSPDAFNRGYEAFQSHMSQPGSAPDRKEGLFLGPDLAEDHPYCVQKKLNCGPNRWPQGLDDLEEFKLVSMEYYAALFQLAKDVVAVLALTMDYEETFFDPLTEGAIATLRYLHYPPQPVGDAEAGLGTGAHRDYSCITLLLQDGTGGLQVLDEPTGQWLDVKPVPGAYIVNLANVFARMTNGHYKSALHRVVNKSGMERYSIPFFFTGNPDYVCECLSRFRKEGEPVRHPPATVHEVVAEAVRGTVERANRYNAERQGIHAAQ.

The Fe2OG dioxygenase domain maps to 179–282; sequence AIATLRYLHY…RYSIPFFFTG (104 aa). The Fe cation site is built by His-205, Asp-207, and His-263. 2-oxoglutarate is bound at residue Arg-273.

It belongs to the iron/ascorbate-dependent oxidoreductase family. It depends on Fe(2+) as a cofactor. Endocrocin is specifically produced in conidia.

It participates in secondary metabolite biosynthesis. In terms of biological role, 2-oxoglutarate-Fe(II) type oxidoreductase; part of the gene cluster that mediates the biosynthesis of endocrocin, a simple anthraquinone interesting for many biotechnological applications. The pathway begins with the synthesis of atrochrysone thioester by the polyketide synthase (PKS) encA. The atrochrysone carboxyl ACP thioesterase encB then breaks the thioester bond and releases the atrochrysone carboxylic acid from encA. The atrochrysone carboxylic acid is then converted to endocrocin anthrone which is further oxidized into endocrocin by encC. The exact function of encD has not been identified yet, but it negatively regulates endocrocin production, likely through the modification of endocrocin itself. The sequence is that of 2-oxoglutarate-Fe(II) type oxidoreductase from Aspergillus fumigatus (strain ATCC MYA-4609 / CBS 101355 / FGSC A1100 / Af293) (Neosartorya fumigata).